The sequence spans 169 residues: Flagellar biosynthetic protein FliU (169 aa).

This sequence belongs to the FliB family.

Required for the secretion of flagellin and expression of motility. The polypeptide is Flagellar biosynthetic protein FliU (fliU) (Salmonella muenchen).